A 156-amino-acid polypeptide reads, in one-letter code: ATP synthase subunit b (156 aa).

A helical transmembrane segment spans residues 1–21 (MNVTVTLIGQMVAFGILVWFV).

This sequence belongs to the ATPase B chain family. In terms of assembly, F-type ATPases have 2 components, F(1) - the catalytic core - and F(0) - the membrane proton channel. F(1) has five subunits: alpha(3), beta(3), gamma(1), delta(1), epsilon(1). F(0) has three main subunits: a(1), b(2) and c(10-14). The alpha and beta chains form an alternating ring which encloses part of the gamma chain. F(1) is attached to F(0) by a central stalk formed by the gamma and epsilon chains, while a peripheral stalk is formed by the delta and b chains.

It localises to the cell inner membrane. In terms of biological role, f(1)F(0) ATP synthase produces ATP from ADP in the presence of a proton or sodium gradient. F-type ATPases consist of two structural domains, F(1) containing the extramembraneous catalytic core and F(0) containing the membrane proton channel, linked together by a central stalk and a peripheral stalk. During catalysis, ATP synthesis in the catalytic domain of F(1) is coupled via a rotary mechanism of the central stalk subunits to proton translocation. Component of the F(0) channel, it forms part of the peripheral stalk, linking F(1) to F(0). This is ATP synthase subunit b from Nitrosococcus oceani (strain ATCC 19707 / BCRC 17464 / JCM 30415 / NCIMB 11848 / C-107).